Consider the following 481-residue polypeptide: UDP-glycosyltransferase 71K2 (481 aa).

Residues S285, 350-351 (WA), 368-376 (HCGWNSILE), and 390-393 (YAEQ) each bind UDP-alpha-D-glucose.

The protein belongs to the UDP-glycosyltransferase family.

In terms of biological role, glycosyltransferase that possesses chalcone and flavonol 2'-O-glycosyltransferase activity. Converts phloretin to phlorizin (phloretin 2'-O-glucoside), a potent antioxidant. Possesses glycosyltransferase activity toward quercetin, isoliquiritigenin, butein and caffeic acid. This is UDP-glycosyltransferase 71K2 from Pyrus communis (Pear).